The following is a 359-amino-acid chain: MTRLDLRAGAAPAPAFVSAAARYGVIERPDLAFTPAIARETAHLYEKVKDFIPAFEWAAYAPYVHAINRLKKERNAVILAHNYQTPDIFHCVADIVGDSLQLARDATKVDAEIIVQCGVHFMAETSKLLNPEKTVLIPDAKAGCSLSESITGADVRLLKERYPGVPVVTYVNTSADVKAETDICCTSSNVLAVVESLESDTVLCIPDEYLAMNVARQTNKKILTWKGHCEVHERFTAAELLAYKEANPGIEIIGHPECHPDVIEVCDFSGSTSGMINYVKDKRPQRVLLVTECSMASNIQAEVQGVDFVKPCNLCPHMKRITLPKILDSLLNMTEEVLVDPAIADRARLAVERMVNLKQ.

Iminosuccinate-binding residues include H81 and S99. C144 contacts [4Fe-4S] cluster. Iminosuccinate contacts are provided by residues 170 to 172 (YVN) and S187. C229 contacts [4Fe-4S] cluster. Residues 255–257 (HPE) and T272 contribute to the iminosuccinate site. C315 is a binding site for [4Fe-4S] cluster.

This sequence belongs to the quinolinate synthase family. Type 2 subfamily. It depends on [4Fe-4S] cluster as a cofactor.

The protein resides in the cytoplasm. The catalysed reaction is iminosuccinate + dihydroxyacetone phosphate = quinolinate + phosphate + 2 H2O + H(+). It participates in cofactor biosynthesis; NAD(+) biosynthesis; quinolinate from iminoaspartate: step 1/1. Functionally, catalyzes the condensation of iminoaspartate with dihydroxyacetone phosphate to form quinolinate. This Sinorhizobium fredii (strain NBRC 101917 / NGR234) protein is Quinolinate synthase.